A 525-amino-acid chain; its full sequence is GMP synthase [glutamine-hydrolyzing] (525 aa).

Residues 9-207 enclose the Glutamine amidotransferase type-1 domain; it reads RILILDFGSQ…VLDICGCEAL (199 aa). C86 (nucleophile) is an active-site residue. Residues H181 and E183 contribute to the active site. The GMPS ATP-PPase domain maps to 208-400; the sequence is WTPSKIAEDA…LGLPYDMVYR (193 aa). 235–241 is an ATP binding site; sequence SGGVDSS.

As to quaternary structure, homodimer.

The enzyme catalyses XMP + L-glutamine + ATP + H2O = GMP + L-glutamate + AMP + diphosphate + 2 H(+). It participates in purine metabolism; GMP biosynthesis; GMP from XMP (L-Gln route): step 1/1. Its function is as follows. Catalyzes the synthesis of GMP from XMP. This Pseudomonas fluorescens (strain Pf0-1) protein is GMP synthase [glutamine-hydrolyzing].